A 188-amino-acid polypeptide reads, in one-letter code: Elongation factor P (188 aa).

This sequence belongs to the elongation factor P family.

The protein resides in the cytoplasm. It participates in protein biosynthesis; polypeptide chain elongation. Its function is as follows. Involved in peptide bond synthesis. Stimulates efficient translation and peptide-bond synthesis on native or reconstituted 70S ribosomes in vitro. Probably functions indirectly by altering the affinity of the ribosome for aminoacyl-tRNA, thus increasing their reactivity as acceptors for peptidyl transferase. The chain is Elongation factor P from Rhodopseudomonas palustris (strain BisB5).